Consider the following 151-residue polypeptide: Conidium-specific protein (151 aa).

Residues 1-72 are disordered; it reads MAKPHCSSRS…FSGDPDSEVE (72 aa). Over residues 48–60 the composition is skewed to basic and acidic residues; it reads RKDNSADKGDTLR.

In Emericella nidulans (strain FGSC A4 / ATCC 38163 / CBS 112.46 / NRRL 194 / M139) (Aspergillus nidulans), this protein is Conidium-specific protein (SpoC1-C1D).